The sequence spans 761 residues: 5-methyltetrahydropteroyltriglutamate--homocysteine methyltransferase (761 aa).

5-methyltetrahydropteroyltri-L-glutamate contacts are provided by residues R16–K19 and K116. Residues I437–S439 and E490 contribute to the L-homocysteine site. L-methionine-binding positions include I437–S439 and E490. Residues R521–C522 and W567 contribute to the 5-methyltetrahydropteroyltri-L-glutamate site. D605 serves as a coordination point for L-homocysteine. Position 605 (D605) interacts with L-methionine. E611 contributes to the 5-methyltetrahydropteroyltri-L-glutamate binding site. Zn(2+)-binding residues include H647, C649, and E671. The active-site Proton donor is H700. C732 contacts Zn(2+).

This sequence belongs to the vitamin-B12 independent methionine synthase family. The cofactor is Zn(2+).

It carries out the reaction 5-methyltetrahydropteroyltri-L-glutamate + L-homocysteine = tetrahydropteroyltri-L-glutamate + L-methionine. It participates in amino-acid biosynthesis; L-methionine biosynthesis via de novo pathway; L-methionine from L-homocysteine (MetE route): step 1/1. Its function is as follows. Catalyzes the transfer of a methyl group from 5-methyltetrahydrofolate to homocysteine resulting in methionine formation. The protein is 5-methyltetrahydropteroyltriglutamate--homocysteine methyltransferase of Chromohalobacter salexigens (strain ATCC BAA-138 / DSM 3043 / CIP 106854 / NCIMB 13768 / 1H11).